The primary structure comprises 637 residues: ATP-dependent rRNA helicase SPB4 (637 aa).

Positions 10-38 match the Q motif motif; the sequence is WENLRVDLEPWLKDAIRSLNYPTMTPVQA. The region spanning 41 to 236 is the Helicase ATP-binding domain; the sequence is IPLLSGNKDV…RTGMNNPVKL (196 aa). 54 to 61 is an ATP binding site; it reads AVTGSGKT. Residues 184 to 187 carry the DEAD box motif; it reads DEAD. Residues 266–444 enclose the Helicase C-terminal domain; sequence KLTTMLQMLR…KFQKKLRKYM (179 aa). The stretch at 528 to 597 forms a coiled coil; the sequence is SAEKARLENL…QLEAEQERGG (70 aa). The interval 554–637 is disordered; it reads LKVKNEAWSS…GVLQGSFDDL (84 aa). Composition is skewed to basic and acidic residues over residues 564-576 and 583-598; these read KTEKRETKLERKE and EAIEKQLEAEQERGGL. Positions 621 to 630 are enriched in gly residues; the sequence is NGGGGGGGVL.

Belongs to the DEAD box helicase family. DDX55/SPB4 subfamily. Component of pre-60S ribosomal complexes.

The protein localises to the nucleus. It is found in the nucleolus. The enzyme catalyses ATP + H2O = ADP + phosphate + H(+). Its function is as follows. ATP-binding RNA helicase involved in the biogenesis of 60S ribosomal subunits. Binds 90S pre-ribosomal particles and dissociates from pre-60S ribosomal particles after processing of 27SB pre-rRNA. Required for the normal formation of 18S rRNA through the processing of pre-rRNAs at sites A0, A1 and A2, and the normal formation of 25S and 5.8S rRNAs through the processing of pre-rRNAs at sites C1 and C2. The sequence is that of ATP-dependent rRNA helicase SPB4 from Lodderomyces elongisporus (strain ATCC 11503 / CBS 2605 / JCM 1781 / NBRC 1676 / NRRL YB-4239) (Yeast).